A 318-amino-acid chain; its full sequence is Esterase FVEG_12639 (318 aa).

Catalysis depends on residues S156, D255, and H285.

Belongs to the AB hydrolase 3 family.

Functionally, esterase; part of the Fusarium detoxification of benzoxazolinone cluster 2 (FDB2) involved in the degradation of benzoxazolinones produced by the host plant. Maize, wheat, and rye produce the 2 benzoxazinone phytoanticipins 2,4-dihy-droxy-7-methoxy-1,4-benzoxazin-3-one (DIMBOA) and 2,4-dihydroxy-1,4-benzoxazin-3-one (DIBOA) that, due to their inherent instability once released, spontaneously degrade to the more stable corresponding benzoxazolinones, 6-methoxy-2-benzoxazolinone (MBOA) and 2-benzoxazolinone (BOA), respectively. The first step in the detoxification of benzoxazolinones involves the hydrolysis of the cyclic ester bond of benzoxazolinones by the FDB1 cluster gamma-lactamase MBL1 to aminophenols. MBL1 is able to convert BOA into 2-aminophenol (2-AP), as well as MBOA into 5-methoxy-2-aminophenol (2-AMP). The FDB2 cluster N-malonyltransferase FDB2/NAT1 then metabolizes aminophenols via N-malonylation to non-toxic malonamic acids. FDB2/NAT1 converts 2-AP into N-(2-hydroxyphenyl) malonamic acid (HPMA) and 2-AMP into N-(2-hydroxy-4-methoxyphenyl) malonamic acid (HMPMA). The duplicated dienlactone hydrolases DLH1 and DLH2 may provide redundant function for hydrolyzing the lactone moiety in the BOA molecule. The roles of the amidases an other enzymes encoded by the 2 FDB clusters have not been identified so far. The protein is Esterase FVEG_12639 of Gibberella moniliformis (strain M3125 / FGSC 7600) (Maize ear and stalk rot fungus).